Here is a 92-residue protein sequence, read N- to C-terminus: Non-structural protein 6 (92 aa).

It belongs to the rotavirus A NSP6 family. In terms of assembly, interacts with NSP2 and NSP5.

It is found in the host cytoplasm. The protein localises to the host mitochondrion. The sequence is that of Non-structural protein 6 from Rotavirus A (strain RVA/Human/Philippines/L26/1987/G12P1B[4]) (RV-A).